We begin with the raw amino-acid sequence, 201 residues long: Protein FAR-RED-ELONGATED HYPOCOTYL 1-LIKE (201 aa).

The Nuclear localization sequence (NLS) signature appears at 32–35 (KKRK). A Nuclear export sequence (NES) motif is present at residues 43-46 (LLPL).

This sequence belongs to the FHY1 protein family. In terms of assembly, homodimer and heterodimer with FHY1. Interacts with PHYA, especially upon far-red (FR) light illumination. Binds to LAF1 and HFR1. In terms of processing, inactivated by rapid reversible PHYA-mediated phosphorylation.

The protein localises to the nucleus. Its subcellular location is the cytoplasm. In terms of biological role, can activate transcription. Essential for light-regulated PHYA nuclear accumulation and subsequent PHYA phototropic signaling processes. PHYA-specific signal transducer in response to continuous FR lights. Mediates the association of PHYA with HFR1 and LAF1 in the nucleus in response to FR conditions. Contributes to inhibition of hypocotyl elongation in continuous blue light (B). In Arabidopsis thaliana (Mouse-ear cress), this protein is Protein FAR-RED-ELONGATED HYPOCOTYL 1-LIKE.